Consider the following 207-residue polypeptide: Macrophage immunometabolism regulator (207 aa).

Met1 carries the post-translational modification N-acetylmethionine. Positions 1 to 41 (MEVDINGDSRSTLTTLPLPVAEGSSPGKAEAEKPRCSSTPC) are disordered. 2 positions are modified to phosphoserine: Ser25 and Ser167.

Belongs to the UNC119-binding protein family. As to quaternary structure, interacts with UNC119 and UNC119B; interaction preferentially takes place when UNC119 and UNC119B are unliganded with myristoylated proteins. Highly expressed in photoreceptors.

The protein localises to the cytoplasm. It localises to the cell projection. The protein resides in the cilium. In terms of biological role, regulates the macrophage function, by enhancing the resolution of inflammation and wound repair functions mediated by M2 macrophages. The regulation of macrophage function is, due at least in part, to its ability to inhibit glycolysis. May also play a role in trafficking of proteins via its interaction with UNC119 and UNC119B cargo adapters: may help the release of UNC119 and UNC119B cargo or the recycling of UNC119 and UNC119B. May play a role in ciliary membrane localization via its interaction with UNC119B and protein transport into photoreceptor cells. The polypeptide is Macrophage immunometabolism regulator (Mus musculus (Mouse)).